Reading from the N-terminus, the 455-residue chain is UPF0053 protein MT1890 (455 aa).

Positions 2–205 (NLTDTVATIL…ARSGALDDAT (204 aa)) constitute a CNNM transmembrane domain. 4 helical membrane passes run 6–26 (TVAT…FVAA), 68–88 (LGIS…VAEL), 106–126 (LITF…GELV), and 148–168 (LFSL…NWIV). CBS domains lie at 224–285 (MTPR…AHTL) and 286–346 (LTTV…VRDE).

Belongs to the UPF0053 family.

Its subcellular location is the cell membrane. In Mycobacterium tuberculosis (strain CDC 1551 / Oshkosh), this protein is UPF0053 protein MT1890.